A 112-amino-acid chain; its full sequence is Reprimo-like protein (112 aa).

Residues 59-79 (VVQIAVLCVLSLTVLFGIFFL) form a helical membrane-spanning segment.

It belongs to the reprimo family.

The protein localises to the membrane. This chain is Reprimo-like protein (rprml), found in Xenopus laevis (African clawed frog).